A 110-amino-acid polypeptide reads, in one-letter code: Serum amyloid A protein (110 aa).

The tract at residues 73-110 is disordered; that stretch reads GGSGRGAEDSRADQAANEWGRSGKDPNHFRPHGLPDKY. Positions 93–110 are enriched in basic and acidic residues; sequence RSGKDPNHFRPHGLPDKY.

This sequence belongs to the SAA family. Post-translationally, this protein is the precursor of amyloid protein A, which is formed by the removal of residues from the C-terminal end. Expressed by the liver; secreted in plasma.

In terms of biological role, major acute phase reactant. Apolipoprotein of the HDL complex. The chain is Serum amyloid A protein (SAA1) from Equus caballus (Horse).